Consider the following 346-residue polypeptide: N-acetyl-gamma-glutamyl-phosphate reductase (346 aa).

The active site involves C154.

Belongs to the NAGSA dehydrogenase family. Type 1 subfamily.

The protein localises to the cytoplasm. It catalyses the reaction N-acetyl-L-glutamate 5-semialdehyde + phosphate + NADP(+) = N-acetyl-L-glutamyl 5-phosphate + NADPH + H(+). It participates in amino-acid biosynthesis; L-arginine biosynthesis; N(2)-acetyl-L-ornithine from L-glutamate: step 3/4. Catalyzes the NADPH-dependent reduction of N-acetyl-5-glutamyl phosphate to yield N-acetyl-L-glutamate 5-semialdehyde. The polypeptide is N-acetyl-gamma-glutamyl-phosphate reductase (Rhodopirellula baltica (strain DSM 10527 / NCIMB 13988 / SH1)).